Consider the following 70-residue polypeptide: Putative membrane protein insertion efficiency factor (70 aa).

This sequence belongs to the UPF0161 family.

The protein localises to the cell membrane. In terms of biological role, could be involved in insertion of integral membrane proteins into the membrane. This Clostridium novyi (strain NT) protein is Putative membrane protein insertion efficiency factor.